Consider the following 394-residue polypeptide: Arogenate dehydratase 2 (394 aa).

The segment at 1-24 (MAATTTLRSPKIPHPPPESTPSNL) is disordered. A chloroplast-targeting transit peptide spans 1–47 (MAATTTLRSPKIPHPPPESTPSNLSYLSQISLTPVPKRRRFISIYAC). One can recognise a Prephenate dehydratase domain in the interval 108-283 (RVAYQGVRGA…NVTRFLMLAR (176 aa)). The 92-residue stretch at 297 to 388 (SVVFSLDEGP…TFLRVLGSYP (92 aa)) folds into the ACT domain.

Expressed at low levels in petals (corollas and tubes), stems, leaves, pistils, stamens, ovaries and sepals.

It localises to the plastid. Its subcellular location is the chloroplast stroma. It catalyses the reaction prephenate + H(+) = 3-phenylpyruvate + CO2 + H2O. The enzyme catalyses L-arogenate + H(+) = L-phenylalanine + CO2 + H2O. Its pathway is amino-acid biosynthesis; L-phenylalanine biosynthesis; L-phenylalanine from L-arogenate: step 1/1. Converts the prephenate and L-arogenate produced from the shikimate-chorismate pathway into 3-phenylpyruvate and phenylalanine (Phe), respectively. Involved in floral volatile benzenoids and phenylpropanoids (FVBP) production. In Petunia hybrida (Petunia), this protein is Arogenate dehydratase 2.